We begin with the raw amino-acid sequence, 273 residues long: Thiazole synthase (273 aa).

The Schiff-base intermediate with DXP role is filled by Lys-111. Residues Gly-172, 198-199, and 220-221 each bind 1-deoxy-D-xylulose 5-phosphate; these read AG and NS. A disordered region spans residues 251-273; it reads RLPRRGQASASSPTTGLISGKDK. Residues 258–267 are compositionally biased toward polar residues; it reads ASASSPTTGL.

The protein belongs to the ThiG family. As to quaternary structure, homotetramer. Forms heterodimers with either ThiH or ThiS.

It localises to the cytoplasm. It catalyses the reaction [ThiS sulfur-carrier protein]-C-terminal-Gly-aminoethanethioate + 2-iminoacetate + 1-deoxy-D-xylulose 5-phosphate = [ThiS sulfur-carrier protein]-C-terminal Gly-Gly + 2-[(2R,5Z)-2-carboxy-4-methylthiazol-5(2H)-ylidene]ethyl phosphate + 2 H2O + H(+). The protein operates within cofactor biosynthesis; thiamine diphosphate biosynthesis. Its function is as follows. Catalyzes the rearrangement of 1-deoxy-D-xylulose 5-phosphate (DXP) to produce the thiazole phosphate moiety of thiamine. Sulfur is provided by the thiocarboxylate moiety of the carrier protein ThiS. In vitro, sulfur can be provided by H(2)S. This chain is Thiazole synthase, found in Synechococcus sp. (strain CC9902).